Here is a 292-residue protein sequence, read N- to C-terminus: Cytochrome c1, heme protein, mitochondrial (292 aa).

The transit peptide at 1–46 directs the protein to the mitochondrion; sequence MFRSFSTAAKQAVKGTYVQRAIVGGAAVVGIGASTMLYADSLTADA. Over 47 to 253 the chain is Mitochondrial intermembrane; the sequence is MTAAEHGLHA…SEPEHDERKR (207 aa). Positions 73 to 226 constitute a Cytochrome c domain; sequence SSIRRGYQVY…DLVEYEDGTP (154 aa). Heme c-binding residues include Cys-86, Cys-89, and His-90. The interval 117-137 is disordered; that stretch reads FEYDDEPDDQGNPKKRPGKLA. Met-210 is a binding site for heme c. Residues 254 to 272 traverse the membrane as a helical segment; sequence LGLKAMIVLSSLYLLSVWV. At 273–292 the chain is on the mitochondrial matrix side; the sequence is KKFKWASIKSRKIVFNPPKK.

It belongs to the cytochrome c family. As to quaternary structure, component of the ubiquinol-cytochrome c oxidoreductase (cytochrome b-c1 complex, complex III, CIII), a multisubunit enzyme composed of 3 respiratory subunits cytochrome b, cytochrome c1 and Rieske protein, 2 core protein subunits, and additional low-molecular weight protein subunits. The complex exists as an obligatory dimer and forms supercomplexes (SCs) in the inner mitochondrial membrane with cytochrome c oxidase (complex IV, CIV). Requires heme c as cofactor.

Its subcellular location is the mitochondrion inner membrane. It carries out the reaction a quinol + 2 Fe(III)-[cytochrome c](out) = a quinone + 2 Fe(II)-[cytochrome c](out) + 2 H(+)(out). Its function is as follows. Component of the ubiquinol-cytochrome c oxidoreductase, a multisubunit transmembrane complex that is part of the mitochondrial electron transport chain which drives oxidative phosphorylation. The respiratory chain contains 3 multisubunit complexes succinate dehydrogenase (complex II, CII), ubiquinol-cytochrome c oxidoreductase (cytochrome b-c1 complex, complex III, CIII) and cytochrome c oxidase (complex IV, CIV), that cooperate to transfer electrons derived from NADH and succinate to molecular oxygen, creating an electrochemical gradient over the inner membrane that drives transmembrane transport and the ATP synthase. The cytochrome b-c1 complex catalyzes electron transfer from ubiquinol to cytochrome c, linking this redox reaction to translocation of protons across the mitochondrial inner membrane, with protons being carried across the membrane as hydrogens on the quinol. In the process called Q cycle, 2 protons are consumed from the matrix, 4 protons are released into the intermembrane space and 2 electrons are passed to cytochrome c. Cytochrome c1 is a catalytic core subunit containing a c-type heme. It transfers electrons from the [2Fe-2S] iron-sulfur cluster of the Rieske protein to cytochrome c. The chain is Cytochrome c1, heme protein, mitochondrial (CYT1) from Kluyveromyces lactis (strain ATCC 8585 / CBS 2359 / DSM 70799 / NBRC 1267 / NRRL Y-1140 / WM37) (Yeast).